A 150-amino-acid polypeptide reads, in one-letter code: UPF0506 protein SJCHGC02381 (150 aa).

An N-terminal signal peptide occupies residues 1 to 18; it reads MNTCIQLLILCLVTVINS. Asn-20, Asn-24, Asn-32, Asn-36, Asn-48, Asn-52, Asn-64, and Asn-110 each carry an N-linked (GlcNAc...) asparagine glycan. Residues 22–49 are disordered; the sequence is TDNSTENTIKNETENATETELPETFENE. Residues 36-49 show a composition bias toward acidic residues; the sequence is NATETELPETFENE. Disulfide bonds link Cys-116–Cys-130, Cys-123–Cys-134, and Cys-129–Cys-139.

The protein belongs to the UPF0506 family.

The protein resides in the secreted. The protein is UPF0506 protein SJCHGC02381 of Schistosoma japonicum (Blood fluke).